The sequence spans 632 residues: Armadillo repeat-containing X-linked protein 2 (632 aa).

Residues 1 to 6 (MSRVRD) lie on the Mitochondrial intermembrane side of the membrane. The interval 1-6 (MSRVRD) is mitochondrion outer membrane (MOM)-targeting sequence. Residues 7–25 (AGCVAAGIVIGAGAWYCVY) traverse the membrane as a helical; Signal-anchor segment. Residues 26–40 (KYTRGRDQTKKRMAK) form a mitochondrion outer membrane (MOM)-targeting sequence region. Over 26 to 632 (KYTRGRDQTK…VKVIKLVNKF (607 aa)) the chain is Cytoplasmic. Disordered regions lie at residues 68-124 (GFSP…AGVG), 160-304 (APKV…KVEV), and 335-369 (VPDSEEGESGWTDTESDSDSEPETQRRGRGRRPVA). 2 stretches are compositionally biased toward low complexity: residues 86 to 120 (EASALDTVGAEAVAPAASSAEAQSGAGSQAQEADG) and 211 to 241 (VASPTEAAEAPVPATPTGAAAPTGAAESPGT). Positions 336–356 (PDSEEGESGWTDTESDSDSEP) are enriched in acidic residues. ARM repeat units follow at residues 376 to 416 (PYEI…NNAN), 418 to 457 (SCNQETIRKLGGLPIIANMINKTDPHIKEKALMAMNNLSE), and 498 to 537 (ITNDYQHLLVNSIANFFRLLSQGGGKIKVEILKILSNFAE).

Belongs to the eutherian X-chromosome-specific Armcx family. In terms of tissue distribution, expressed at high levels ovary, heart, testis, prostate, brain, spleen and colon. Expressed at very low levels in liver and thymus. Not expressed in peripheral blood leukocytes. Not expressed in pancreas and ovarian carcinomas.

It localises to the mitochondrion. It is found in the mitochondrion outer membrane. Functionally, may regulate the dynamics and distribution of mitochondria in neural cells. This is Armadillo repeat-containing X-linked protein 2 (ARMCX2) from Homo sapiens (Human).